A 200-amino-acid chain; its full sequence is Recombination protein RecR (200 aa).

Residues 57–72 (CRQCRTLTEQELCPQC) form a C4-type zinc finger. One can recognise a Toprim domain in the interval 80 to 175 (TQLCVVEGPV…TATRIAHGVP (96 aa)).

Belongs to the RecR family.

May play a role in DNA repair. It seems to be involved in an RecBC-independent recombinational process of DNA repair. It may act with RecF and RecO. This chain is Recombination protein RecR, found in Pseudomonas entomophila (strain L48).